The primary structure comprises 492 residues: Xaa-Pro dipeptidase (492 aa).

At alanine 2 the chain carries N-acetylalanine. Position 167 is a phosphoserine (serine 167). Residue histidine 255 participates in a dipeptide binding. Mn(2+) contacts are provided by aspartate 276, aspartate 287, and histidine 370. Aspartate 287 lines the a dipeptide pocket. Histidine 377 and arginine 398 together coordinate a dipeptide. Residues glutamate 412 and glutamate 452 each coordinate Mn(2+).

Belongs to the peptidase M24B family. Eukaryotic-type prolidase subfamily. As to quaternary structure, homodimer. Mn(2+) serves as cofactor.

The catalysed reaction is Xaa-L-Pro dipeptide + H2O = an L-alpha-amino acid + L-proline. Dipeptidase that catalyzes the hydrolysis of dipeptides with a prolyl (Xaa-Pro) or hydroxyprolyl residue in the C-terminal position. The preferred dipeptide substrate is Gly-Pro, but other Xaa-Pro dipeptides, such as Ala-Pro, Met-Pro, Phe-Pro, Val-Pro and Leu-Pro, can be cleaved. Plays an important role in collagen metabolism because the high level of iminoacids in collagen. In Rattus norvegicus (Rat), this protein is Xaa-Pro dipeptidase (Pepd).